Consider the following 239-residue polypeptide: dITP/XTP pyrophosphatase (239 aa).

A substrate-binding site is contributed by 7–12 (THNEGK). The active-site Proton acceptor is D74. A Mg(2+)-binding site is contributed by D74. Substrate-binding positions include S75, 182-185 (FGYD), K214, and 219-220 (HR).

It belongs to the HAM1 NTPase family. In terms of assembly, homodimer. Requires Mg(2+) as cofactor.

It catalyses the reaction XTP + H2O = XMP + diphosphate + H(+). The enzyme catalyses dITP + H2O = dIMP + diphosphate + H(+). It carries out the reaction ITP + H2O = IMP + diphosphate + H(+). Its function is as follows. Pyrophosphatase that catalyzes the hydrolysis of nucleoside triphosphates to their monophosphate derivatives, with a high preference for the non-canonical purine nucleotides XTP (xanthosine triphosphate), dITP (deoxyinosine triphosphate) and ITP. Seems to function as a house-cleaning enzyme that removes non-canonical purine nucleotides from the nucleotide pool, thus preventing their incorporation into DNA/RNA and avoiding chromosomal lesions. This Bifidobacterium animalis subsp. lactis (strain AD011) protein is dITP/XTP pyrophosphatase.